Reading from the N-terminus, the 493-residue chain is Cytochrome P450 710A4 (493 aa).

The chain crosses the membrane as a helical span at residues 5–25; the sequence is VSLFASLTPYLVSALLLFLLL. Cys435 contacts heme.

This sequence belongs to the cytochrome P450 family. Requires heme as cofactor. In terms of tissue distribution, very weak expression in roots and root hairs. Not detected in the root tips.

It is found in the membrane. It carries out the reaction 5-dehydroepisterol + NADPH + O2 + H(+) = ergosta-5,7,22,24(28)-tetraen-3beta-ol + NADP(+) + 2 H2O. The protein operates within steroid biosynthesis; sterol biosynthesis. In terms of biological role, required to form the C-22 double bond in the sterol side chain. Possesses C-22 desaturase activity toward beta-sitosterol and produces stigmasterol. The chain is Cytochrome P450 710A4 from Arabidopsis thaliana (Mouse-ear cress).